A 259-amino-acid chain; its full sequence is Acyl-[acyl-carrier-protein]--UDP-N-acetylglucosamine O-acyltransferase (259 aa).

The protein belongs to the transferase hexapeptide repeat family. LpxA subfamily. As to quaternary structure, homotrimer.

The protein localises to the cytoplasm. The enzyme catalyses a (3R)-hydroxyacyl-[ACP] + UDP-N-acetyl-alpha-D-glucosamine = a UDP-3-O-[(3R)-3-hydroxyacyl]-N-acetyl-alpha-D-glucosamine + holo-[ACP]. It participates in glycolipid biosynthesis; lipid IV(A) biosynthesis; lipid IV(A) from (3R)-3-hydroxytetradecanoyl-[acyl-carrier-protein] and UDP-N-acetyl-alpha-D-glucosamine: step 1/6. In terms of biological role, involved in the biosynthesis of lipid A, a phosphorylated glycolipid that anchors the lipopolysaccharide to the outer membrane of the cell. This Akkermansia muciniphila (strain ATCC BAA-835 / DSM 22959 / JCM 33894 / BCRC 81048 / CCUG 64013 / CIP 107961 / Muc) protein is Acyl-[acyl-carrier-protein]--UDP-N-acetylglucosamine O-acyltransferase.